The following is a 425-amino-acid chain: Dihydroorotase (425 aa).

Residues histidine 56 and histidine 58 each coordinate Zn(2+). Substrate is bound by residues 58 to 60 and asparagine 90; that span reads HYR. Aspartate 148, histidine 175, and histidine 228 together coordinate Zn(2+). Residue asparagine 274 coordinates substrate. Zn(2+) is bound at residue aspartate 301. The active site involves aspartate 301. Residues histidine 305 and 319 to 320 contribute to the substrate site; that span reads FG.

This sequence belongs to the metallo-dependent hydrolases superfamily. DHOase family. Class I DHOase subfamily. Zn(2+) is required as a cofactor.

The enzyme catalyses (S)-dihydroorotate + H2O = N-carbamoyl-L-aspartate + H(+). It functions in the pathway pyrimidine metabolism; UMP biosynthesis via de novo pathway; (S)-dihydroorotate from bicarbonate: step 3/3. In terms of biological role, catalyzes the reversible cyclization of carbamoyl aspartate to dihydroorotate. In Lactobacillus helveticus (strain DPC 4571), this protein is Dihydroorotase.